The following is a 244-amino-acid chain: Small ribosomal subunit protein uS2 (244 aa).

Belongs to the universal ribosomal protein uS2 family.

The chain is Small ribosomal subunit protein uS2 from Psychromonas ingrahamii (strain DSM 17664 / CCUG 51855 / 37).